We begin with the raw amino-acid sequence, 465 residues long: MSVKSTVEQLSPTRVRINVEVPFEELKPDFDRAYKALAKQVRIPGFRPGKAPAKLLEARLGRGAILEQVVNDVLPARYSEAVTTSEVKVIGQPDIEITKIEDGQEFAFSAEVDVRPEIALPDYADLEVTVDAFTIGDEDIEEQLNSLRQRFGTLTGVERPVQEGDFVSIDLSATVDGQEVPEASTTGLSHEVGSGQLIEGLDEALIGLSAGESKEFTSTLVAGEHAGKEAVITVTVQSVKERELPEADDEFAQLASEFDTLEELKADLRSRVERVKKVQQAGEIRDKVLEALLEKTEVPLPEKVVQAEIDAVLHDAVHGFDHDEAKLAEALEAQGSSRAEFDKDTKEAAEKSVKTQLLLDAIAEAEGTQVGQEELTERILFQAQRYGMAPEQFIQQVQQAGQLGAVFADVRRGKALAGVVGKVKVTDSEGNTVDTAEMFGEPAAEPEQADAAQAGDAEKAAADSE.

One can recognise a PPIase FKBP-type domain in the interval 164 to 245 (GDFVSIDLSA…VQSVKERELP (82 aa)). The tract at residues 430–465 (GNTVDTAEMFGEPAAEPEQADAAQAGDAEKAAADSE) is disordered. Residues 440-455 (GEPAAEPEQADAAQAG) are compositionally biased toward low complexity. Residues 456-465 (DAEKAAADSE) are compositionally biased toward basic and acidic residues.

It belongs to the FKBP-type PPIase family. Tig subfamily.

It localises to the cytoplasm. It carries out the reaction [protein]-peptidylproline (omega=180) = [protein]-peptidylproline (omega=0). Involved in protein export. Acts as a chaperone by maintaining the newly synthesized protein in an open conformation. Functions as a peptidyl-prolyl cis-trans isomerase. In Nocardia farcinica (strain IFM 10152), this protein is Trigger factor.